The following is a 352-amino-acid chain: Neutral protease 2 (352 aa).

The N-terminal stretch at 1–19 (MRVTTLSTALFALASTAVS) is a signal peptide. Positions 20–175 (APTAGSSSPG…TKALSQLTRR (156 aa)) are excised as a propeptide. 3 disulfide bridges follow: C181-C253, C260-C278, and C292-C352. H303 contacts Zn(2+). Residue E304 is part of the active site. Zn(2+) contacts are provided by H307 and D318.

This sequence belongs to the peptidase M35 family. Zn(2+) is required as a cofactor.

It carries out the reaction Preferential cleavage of bonds with hydrophobic residues in P1'. Also 3-Asn-|-Gln-4 and 8-Gly-|-Ser-9 bonds in insulin B chain.. Metalloprotease that shows high activities on basic nuclear substrates such as histone and protamine. The sequence is that of Neutral protease 2 from Aspergillus oryzae (strain ATCC 42149 / RIB 40) (Yellow koji mold).